Consider the following 100-residue polypeptide: Urease subunit gamma (100 aa).

Belongs to the urease gamma subunit family. As to quaternary structure, heterotrimer of UreA (gamma), UreB (beta) and UreC (alpha) subunits. Three heterotrimers associate to form the active enzyme.

It localises to the cytoplasm. The enzyme catalyses urea + 2 H2O + H(+) = hydrogencarbonate + 2 NH4(+). It participates in nitrogen metabolism; urea degradation; CO(2) and NH(3) from urea (urease route): step 1/1. This chain is Urease subunit gamma, found in Cupriavidus taiwanensis (strain DSM 17343 / BCRC 17206 / CCUG 44338 / CIP 107171 / LMG 19424 / R1) (Ralstonia taiwanensis (strain LMG 19424)).